A 165-amino-acid chain; its full sequence is Cyclic pyranopterin monophosphate synthase (165 aa).

Substrate is bound by residues 76–78 (LCH) and 114–115 (ME). Residue D129 is part of the active site.

The protein belongs to the MoaC family. Homohexamer; trimer of dimers.

The enzyme catalyses (8S)-3',8-cyclo-7,8-dihydroguanosine 5'-triphosphate = cyclic pyranopterin phosphate + diphosphate. It functions in the pathway cofactor biosynthesis; molybdopterin biosynthesis. Its function is as follows. Catalyzes the conversion of (8S)-3',8-cyclo-7,8-dihydroguanosine 5'-triphosphate to cyclic pyranopterin monophosphate (cPMP). The sequence is that of Cyclic pyranopterin monophosphate synthase from Brucella abortus (strain 2308).